We begin with the raw amino-acid sequence, 383 residues long: Protein salvador homolog 1 (383 aa).

A phosphoserine mark is found at serine 94 and serine 136. 2 consecutive WW domains span residues 199 to 232 and 234 to 267; these read LPLPPGWSVDWTMRGRKYYIDHNTNTTHWSHPLE and EGLPPGWERVESSEFGTYYVDHTNKKAQYRHPCA. At threonine 210 the chain carries Phosphothreonine. Residues 321-368 enclose the SARAH domain; sequence ILKWELFQLADLDTYQGMLKLLFMKELEQIVKMYEAYRQALLTELENR. Residues 344-373 are a coiled coil; that stretch reads MKELEQIVKMYEAYRQALLTELENRKQRQQ.

As to quaternary structure, homodimer. Stabilized through interaction with STK3/MST2 or STK4/MST1. Interacts (via SARAH domain) with isoform 1 of NEK2. Interacts with ESR1 only in the presence of STK3/MST2. Interacts with WTIP and AJUBA. In terms of processing, phosphorylated by STK3/MST2 and STK4/MST1. Phosphorylation is not required for SAV1 stability and may increase the number of protein binding sites on the scaffold molecule. In terms of tissue distribution, ubiquitously expressed in adult tissues with highest expression in the pancreas, aorta and interventricular septum and lowest expression in skeletal muscle. Expression was higher in fetal than in the adult heart. Expressed in various cell lines.

The protein localises to the nucleus. It is found in the cytoplasm. Its function is as follows. Regulator of STK3/MST2 and STK4/MST1 in the Hippo signaling pathway which plays a pivotal role in organ size control and tumor suppression by restricting proliferation and promoting apoptosis. The core of this pathway is composed of a kinase cascade wherein STK3/MST2 and STK4/MST1, in complex with its regulatory protein SAV1, phosphorylates and activates LATS1/2 in complex with its regulatory protein MOB1, which in turn phosphorylates and inactivates YAP1 oncoprotein and WWTR1/TAZ. Phosphorylation of YAP1 by LATS1/2 inhibits its translocation into the nucleus to regulate cellular genes important for cell proliferation, cell death, and cell migration. SAV1 is required for STK3/MST2 and STK4/MST1 activation and promotes cell-cycle exit and terminal differentiation in developing epithelial tissues. Plays a role in centrosome disjunction by regulating the localization of NEK2 to centrosomes, and its ability to phosphorylate CROCC and CEP250. In conjunction with STK3/MST2, activates the transcriptional activity of ESR1 through the modulation of its phosphorylation. The protein is Protein salvador homolog 1 of Homo sapiens (Human).